The following is a 369-amino-acid chain: MRLKNIQVENFRNHHSLAFQPEEGITVLYGPNGSGKTSVLEAIHYCALTKSLLGAPESECLAFSEEYFIISGEFVSTRGTSLSVKVSYGKDRGKLVQLNQSEVKPFSQHVGTIPCITFSPSEIAIVNGSPGERRRFLDNALSQSDRRYLDELLDYRRVLQQRNALLLQLASSSGGSREMLDLWTENLADLAAGVTLRRISFLGELSVYFEPLQTSLAGKGSHLVTYRSSFGTIDSGLSRDELRDRYIKRFKETQRQELLRTQTMSGPHRDDLLFLSNGREIKKYGSQGQQRAFLISLKLALFRYFSHRLPESPICLFDDMFSELDAERTSEIFNILEDCGQTILTTTDGSLHPASQAVSVTALPGYRGG.

ATP is bound at residue 30 to 37 (GPNGSGKT).

It belongs to the RecF family.

It is found in the cytoplasm. Functionally, the RecF protein is involved in DNA metabolism; it is required for DNA replication and normal SOS inducibility. RecF binds preferentially to single-stranded, linear DNA. It also seems to bind ATP. This is DNA replication and repair protein RecF from Chlorobium luteolum (strain DSM 273 / BCRC 81028 / 2530) (Pelodictyon luteolum).